The primary structure comprises 185 residues: Elongation factor P (185 aa).

The protein belongs to the elongation factor P family.

The protein resides in the cytoplasm. The protein operates within protein biosynthesis; polypeptide chain elongation. In terms of biological role, involved in peptide bond synthesis. Stimulates efficient translation and peptide-bond synthesis on native or reconstituted 70S ribosomes in vitro. Probably functions indirectly by altering the affinity of the ribosome for aminoacyl-tRNA, thus increasing their reactivity as acceptors for peptidyl transferase. The polypeptide is Elongation factor P (Bacillus licheniformis (strain ATCC 14580 / DSM 13 / JCM 2505 / CCUG 7422 / NBRC 12200 / NCIMB 9375 / NCTC 10341 / NRRL NRS-1264 / Gibson 46)).